Here is a 101-residue protein sequence, read N- to C-terminus: Vacuolar ATPase assembly integral membrane protein VMA21 (101 aa).

The Cytoplasmic segment spans residues 1–25 (MERLDKAALNALQPSDFRNESSLAS). The chain crosses the membrane as a helical span at residues 26–46 (TLKTLLFFTALMITVPIGLYF). The Lumenal segment spans residues 47–65 (TTKSYVFEGAFGMSNRDSY). Residues 66–86 (FYAAIVAVVAVHVVLALFVYV) form a helical membrane-spanning segment. At 87–101 (AWNEGSRQWREGKQD) the chain is on the cytoplasmic side.

It belongs to the VMA21 family. Associates with the V0 complex of the vacuolar ATPase (V-ATPase). Interacts with ATP6AP2.

It localises to the endoplasmic reticulum membrane. The protein resides in the endoplasmic reticulum-Golgi intermediate compartment membrane. Its subcellular location is the cytoplasmic vesicle. It is found in the COPII-coated vesicle membrane. Its function is as follows. Required for the assembly of the V0 complex of the vacuolar ATPase (V-ATPase) in the endoplasmic reticulum. This is Vacuolar ATPase assembly integral membrane protein VMA21 from Bos taurus (Bovine).